The following is a 101-amino-acid chain: Small ribosomal subunit protein uS14 (101 aa).

The segment at 49–70 is disordered; it reads QSLPRDSSPSRQRNRCNQTGRP. Residues 52–68 show a composition bias toward polar residues; it reads PRDSSPSRQRNRCNQTG.

This sequence belongs to the universal ribosomal protein uS14 family. In terms of assembly, part of the 30S ribosomal subunit. Contacts proteins S3 and S10.

Its function is as follows. Binds 16S rRNA, required for the assembly of 30S particles and may also be responsible for determining the conformation of the 16S rRNA at the A site. This Yersinia pseudotuberculosis serotype O:1b (strain IP 31758) protein is Small ribosomal subunit protein uS14.